Consider the following 155-residue polypeptide: 6,7-dimethyl-8-ribityllumazine synthase (155 aa).

Residues Phe-24, 58 to 60 (AFE), and 82 to 84 (AII) each bind 5-amino-6-(D-ribitylamino)uracil. 87–88 (ST) lines the (2S)-2-hydroxy-3-oxobutyl phosphate pocket. Catalysis depends on His-90, which acts as the Proton donor. Position 115 (Phe-115) interacts with 5-amino-6-(D-ribitylamino)uracil. Arg-129 is a binding site for (2S)-2-hydroxy-3-oxobutyl phosphate.

Belongs to the DMRL synthase family.

The enzyme catalyses (2S)-2-hydroxy-3-oxobutyl phosphate + 5-amino-6-(D-ribitylamino)uracil = 6,7-dimethyl-8-(1-D-ribityl)lumazine + phosphate + 2 H2O + H(+). The protein operates within cofactor biosynthesis; riboflavin biosynthesis; riboflavin from 2-hydroxy-3-oxobutyl phosphate and 5-amino-6-(D-ribitylamino)uracil: step 1/2. In terms of biological role, catalyzes the formation of 6,7-dimethyl-8-ribityllumazine by condensation of 5-amino-6-(D-ribitylamino)uracil with 3,4-dihydroxy-2-butanone 4-phosphate. This is the penultimate step in the biosynthesis of riboflavin. The chain is 6,7-dimethyl-8-ribityllumazine synthase from Chlorobium phaeobacteroides (strain BS1).